We begin with the raw amino-acid sequence, 302 residues long: Phosphoribosylaminoimidazole-succinocarboxamide synthase (302 aa).

This sequence belongs to the SAICAR synthetase family.

The catalysed reaction is 5-amino-1-(5-phospho-D-ribosyl)imidazole-4-carboxylate + L-aspartate + ATP = (2S)-2-[5-amino-1-(5-phospho-beta-D-ribosyl)imidazole-4-carboxamido]succinate + ADP + phosphate + 2 H(+). Its pathway is purine metabolism; IMP biosynthesis via de novo pathway; 5-amino-1-(5-phospho-D-ribosyl)imidazole-4-carboxamide from 5-amino-1-(5-phospho-D-ribosyl)imidazole-4-carboxylate: step 1/2. The chain is Phosphoribosylaminoimidazole-succinocarboxamide synthase from Cupriavidus taiwanensis (strain DSM 17343 / BCRC 17206 / CCUG 44338 / CIP 107171 / LMG 19424 / R1) (Ralstonia taiwanensis (strain LMG 19424)).